Here is a 233-residue protein sequence, read N- to C-terminus: Uridylate kinase (233 aa).

An ATP-binding site is contributed by 9–10 (GS). Gly-43 contributes to the UMP binding site. Residues Gly-44 and Arg-48 each contribute to the ATP site. UMP-binding positions include Asp-65 and 113 to 119 (VTPGQTT). Residues Thr-139, Tyr-145, and Asp-148 each coordinate ATP.

This sequence belongs to the UMP kinase family. Homohexamer.

Its subcellular location is the cytoplasm. It catalyses the reaction UMP + ATP = UDP + ADP. It participates in pyrimidine metabolism; CTP biosynthesis via de novo pathway; UDP from UMP (UMPK route): step 1/1. Its activity is regulated as follows. Inhibited by UTP. Its function is as follows. Catalyzes the reversible phosphorylation of UMP to UDP. The polypeptide is Uridylate kinase (Methanosarcina acetivorans (strain ATCC 35395 / DSM 2834 / JCM 12185 / C2A)).